The chain runs to 377 residues: Bradyzoite pseudokinase 1 (377 aa).

The N-terminal stretch at 1 to 26 (MANTSVRRRQLLSSVLLLQWLTTVLG) is a signal peptide. Residues 39–58 (HGQFPSLRRTEGVSQSGSGH) are disordered. The Protein kinase domain maps to 48–354 (TEGVSQSGSG…IEEIMKDPLF (307 aa)).

It belongs to the protein kinase superfamily. STE Ser/Thr protein kinase family. WNG subfamily. In terms of assembly, forms a complex composed of BPK1, MCP4, MAG1, GRA8 and GRA9. Interacts with MCP4. Interacts with MAG1. Interacts with GRA8. Interacts with GRA9.

The protein localises to the secreted. Functionally, required for the growth, maintenance, and/or stability, and thus infectivity, of bradyzoite cysts. In Toxoplasma gondii, this protein is Bradyzoite pseudokinase 1.